The chain runs to 156 residues: V-type proton ATPase 16 kDa proteolipid subunit c (156 aa).

At 1–7 (MAENPIY) the chain is on the lumenal side. A helical membrane pass occupies residues 8–30 (GPFFGVMGAASAIIFSALGAAYG). The Cytoplasmic portion of the chain corresponds to 31 to 52 (TAKSGTGIAAMSVMRPELIMKS). The chain crosses the membrane as a helical span at residues 53 to 73 (IIPVVMAGIIAIYGLVVAVLI). Over 74-92 (AGSLDSPSNNYTLYRGFIH) the chain is Lumenal. A helical membrane pass occupies residues 93 to 114 (LGAGLAVGFSGLAAGFAIGIVG). Topologically, residues 115–126 (DAGVRGTAQQPR) are cytoplasmic. Residues 127-152 (LFVGMILILIFAEVLGLYGLIVAIYL) form a helical membrane-spanning segment. Over 153–156 (YTKQ) the chain is Lumenal.

Belongs to the V-ATPase proteolipid subunit family. V-ATPase is a heteromultimeric enzyme made up of two complexes: the ATP-hydrolytic V1 complex and the proton translocation V0 complex. The V1 complex consists of three catalytic AB heterodimers that form a heterohexamer, three peripheral stalks each consisting of EG heterodimers, one central rotor including subunits D and F, and the regulatory subunits C and H. The proton translocation complex V0 consists of the proton transport subunit a, a ring of proteolipid subunits c9c'', rotary subunit d, subunits e and f, and the accessory subunits VhaAC45 and ATP6AP2.

Its subcellular location is the membrane. Its function is as follows. Proton-conducting pore forming subunit of the V0 complex of vacuolar(H+)-ATPase (V-ATPase), a multisubunit enzyme composed of a peripheral complex (V1) that hydrolyzes ATP and a membrane integral complex (V0) that translocates protons. V-ATPase is responsible for acidifying and maintaining the pH of intracellular compartments and in some cell types, is targeted to the plasma membrane, where it is responsible for acidifying the extracellular environment. The chain is V-type proton ATPase 16 kDa proteolipid subunit c (VHA16) from Manduca sexta (Tobacco hawkmoth).